We begin with the raw amino-acid sequence, 305 residues long: 4-hydroxy-tetrahydrodipicolinate synthase 1 (305 aa).

Thr53 lines the pyruvate pocket. Catalysis depends on Tyr141, which acts as the Proton donor/acceptor. Lys169 (schiff-base intermediate with substrate) is an active-site residue. Residue Val209 participates in pyruvate binding.

The protein belongs to the DapA family. In terms of assembly, homotetramer; dimer of dimers.

It is found in the cytoplasm. It catalyses the reaction L-aspartate 4-semialdehyde + pyruvate = (2S,4S)-4-hydroxy-2,3,4,5-tetrahydrodipicolinate + H2O + H(+). Its pathway is amino-acid biosynthesis; L-lysine biosynthesis via DAP pathway; (S)-tetrahydrodipicolinate from L-aspartate: step 3/4. Catalyzes the condensation of (S)-aspartate-beta-semialdehyde [(S)-ASA] and pyruvate to 4-hydroxy-tetrahydrodipicolinate (HTPA). This is 4-hydroxy-tetrahydrodipicolinate synthase 1 from Streptomyces coelicolor (strain ATCC BAA-471 / A3(2) / M145).